A 136-amino-acid polypeptide reads, in one-letter code: Transmembrane protein 203 (136 aa).

The next 4 helical transmembrane spans lie at 14 to 34 (FAQLEIFLHISALLVFTVLLA), 50 to 72 (FIPFFTADGLSTYFTTIVTVRLF), 81 to 101 (VLRLFWILTILSLKFIFEMLL), and 112 to 132 (LWYGLIMSPIFILLQLLMIRA).

It localises to the endoplasmic reticulum membrane. Its subcellular location is the endoplasmic reticulum-Golgi intermediate compartment. Functionally, involved in the regulation of cellular calcium homeotasis. May act as a regulator of STING-mediated inflammatory signaling in macrophages. The sequence is that of Transmembrane protein 203 (tmem203) from Xenopus laevis (African clawed frog).